A 102-amino-acid chain; its full sequence is Putative pterin-4-alpha-carbinolamine dehydratase (102 aa).

Belongs to the pterin-4-alpha-carbinolamine dehydratase family.

The enzyme catalyses (4aS,6R)-4a-hydroxy-L-erythro-5,6,7,8-tetrahydrobiopterin = (6R)-L-erythro-6,7-dihydrobiopterin + H2O. The protein is Putative pterin-4-alpha-carbinolamine dehydratase of Psychromonas ingrahamii (strain DSM 17664 / CCUG 51855 / 37).